The primary structure comprises 323 residues: Acetyl esterase (323 aa).

Positions 91–93 match the Involved in the stabilization of the negatively charged intermediate by the formation of the oxyanion hole motif; that stretch reads HGG. Active-site residues include Ser165, Asp262, and His292.

Belongs to the 'GDXG' lipolytic enzyme family. As to quaternary structure, homodimer. Interacts with MalT and MelA.

It is found in the cytoplasm. Its function is as follows. Displays esterase activity towards short chain fatty esters (acyl chain length of up to 8 carbons). Able to hydrolyze triacetylglycerol (triacetin) and tributyrylglycerol (tributyrin), but not trioleylglycerol (triolein) or cholesterol oleate. Negatively regulates MalT activity by antagonizing maltotriose binding. Inhibits MelA galactosidase activity. This is Acetyl esterase from Salmonella schwarzengrund (strain CVM19633).